A 179-amino-acid chain; its full sequence is Bifunctional protein PyrR (179 aa).

The PRPP-binding motif lies at 99–111; sequence VILVDDVLYTGRT.

The protein belongs to the purine/pyrimidine phosphoribosyltransferase family. PyrR subfamily. As to quaternary structure, homodimer and homohexamer; in equilibrium.

It carries out the reaction UMP + diphosphate = 5-phospho-alpha-D-ribose 1-diphosphate + uracil. Functionally, regulates transcriptional attenuation of the pyrimidine nucleotide (pyr) operon by binding in a uridine-dependent manner to specific sites on pyr mRNA. This disrupts an antiterminator hairpin in the RNA and favors formation of a downstream transcription terminator, leading to a reduced expression of downstream genes. Also displays a weak uracil phosphoribosyltransferase activity which is not physiologically significant. The chain is Bifunctional protein PyrR from Brevibacillus brevis (strain 47 / JCM 6285 / NBRC 100599).